We begin with the raw amino-acid sequence, 922 residues long: Isoleucine--tRNA ligase (922 aa).

Residues 58-68 carry the 'HIGH' region motif; that stretch reads PYANGDIHIGH. Glutamate 552 lines the L-isoleucyl-5'-AMP pocket. Positions 593 to 597 match the 'KMSKS' region motif; that stretch reads KMSKS. Lysine 596 is an ATP binding site. 4 residues coordinate Zn(2+): cysteine 885, cysteine 888, cysteine 905, and cysteine 908.

Belongs to the class-I aminoacyl-tRNA synthetase family. IleS type 1 subfamily. In terms of assembly, monomer. Zn(2+) is required as a cofactor.

It localises to the cytoplasm. The enzyme catalyses tRNA(Ile) + L-isoleucine + ATP = L-isoleucyl-tRNA(Ile) + AMP + diphosphate. Catalyzes the attachment of isoleucine to tRNA(Ile). As IleRS can inadvertently accommodate and process structurally similar amino acids such as valine, to avoid such errors it has two additional distinct tRNA(Ile)-dependent editing activities. One activity is designated as 'pretransfer' editing and involves the hydrolysis of activated Val-AMP. The other activity is designated 'posttransfer' editing and involves deacylation of mischarged Val-tRNA(Ile). The sequence is that of Isoleucine--tRNA ligase from Ruthia magnifica subsp. Calyptogena magnifica.